The sequence spans 828 residues: Periplasmic nitrate reductase (828 aa).

The tat-type signal signal peptide spans 1–31 (MKLSRRSFMKANAVAAVAAAAGLSVPGVARA). In terms of domain architecture, 4Fe-4S Mo/W bis-MGD-type spans 39-95 (IKWDKAPCRFCGTGCGVLVGTQQGRVVACQGDPDAPVNRGLNCIKGYFLPKIMYGKD). Cys-46, Cys-49, Cys-53, and Cys-81 together coordinate [4Fe-4S] cluster. Mo-bis(molybdopterin guanine dinucleotide) contacts are provided by residues Lys-83, Gln-150, Asn-175, Cys-179, 212–219 (WGANMAEM), 243–247 (STYQH), 262–264 (QSD), Met-372, Gln-376, Asn-482, 508–509 (SD), Lys-531, Asp-558, and 718–727 (TGRVLEHWHT). Phe-794 is a binding site for substrate. Mo-bis(molybdopterin guanine dinucleotide)-binding residues include Asn-802 and Lys-819.

This sequence belongs to the prokaryotic molybdopterin-containing oxidoreductase family. NasA/NapA/NarB subfamily. Component of the periplasmic nitrate reductase NapAB complex composed of NapA and NapB. The cofactor is [4Fe-4S] cluster. It depends on Mo-bis(molybdopterin guanine dinucleotide) as a cofactor. In terms of processing, predicted to be exported by the Tat system. The position of the signal peptide cleavage has not been experimentally proven.

The protein resides in the periplasm. The enzyme catalyses 2 Fe(II)-[cytochrome] + nitrate + 2 H(+) = 2 Fe(III)-[cytochrome] + nitrite + H2O. Functionally, catalytic subunit of the periplasmic nitrate reductase complex NapAB. Receives electrons from NapB and catalyzes the reduction of nitrate to nitrite. The sequence is that of Periplasmic nitrate reductase from Shigella boydii serotype 4 (strain Sb227).